A 226-amino-acid polypeptide reads, in one-letter code: Cytidylate kinase (226 aa).

10–18 (GPASSGKST) is an ATP binding site.

Belongs to the cytidylate kinase family. Type 1 subfamily.

Its subcellular location is the cytoplasm. It carries out the reaction CMP + ATP = CDP + ADP. The catalysed reaction is dCMP + ATP = dCDP + ADP. The polypeptide is Cytidylate kinase (Streptococcus thermophilus (strain ATCC BAA-491 / LMD-9)).